We begin with the raw amino-acid sequence, 291 residues long: Phosphatidylserine decarboxylase proenzyme (291 aa).

Residues D90, H147, and S253 each act as charge relay system; for autoendoproteolytic cleavage activity in the active site. S253 acts as the Schiff-base intermediate with substrate; via pyruvic acid; for decarboxylase activity in catalysis. At S253 the chain carries Pyruvic acid (Ser); by autocatalysis.

Belongs to the phosphatidylserine decarboxylase family. PSD-B subfamily. Prokaryotic type I sub-subfamily. Heterodimer of a large membrane-associated beta subunit and a small pyruvoyl-containing alpha subunit. Pyruvate serves as cofactor. Is synthesized initially as an inactive proenzyme. Formation of the active enzyme involves a self-maturation process in which the active site pyruvoyl group is generated from an internal serine residue via an autocatalytic post-translational modification. Two non-identical subunits are generated from the proenzyme in this reaction, and the pyruvate is formed at the N-terminus of the alpha chain, which is derived from the carboxyl end of the proenzyme. The autoendoproteolytic cleavage occurs by a canonical serine protease mechanism, in which the side chain hydroxyl group of the serine supplies its oxygen atom to form the C-terminus of the beta chain, while the remainder of the serine residue undergoes an oxidative deamination to produce ammonia and the pyruvoyl prosthetic group on the alpha chain. During this reaction, the Ser that is part of the protease active site of the proenzyme becomes the pyruvoyl prosthetic group, which constitutes an essential element of the active site of the mature decarboxylase.

It localises to the cell membrane. It carries out the reaction a 1,2-diacyl-sn-glycero-3-phospho-L-serine + H(+) = a 1,2-diacyl-sn-glycero-3-phosphoethanolamine + CO2. It functions in the pathway phospholipid metabolism; phosphatidylethanolamine biosynthesis; phosphatidylethanolamine from CDP-diacylglycerol: step 2/2. Catalyzes the formation of phosphatidylethanolamine (PtdEtn) from phosphatidylserine (PtdSer). The protein is Phosphatidylserine decarboxylase proenzyme of Photobacterium profundum (strain SS9).